The chain runs to 399 residues: Enoyl-[acyl-carrier-protein] reductase [NADH] (399 aa).

Residues 48-53 (GASTGY), 74-75 (FE), 111-112 (DA), and 139-140 (LA) contribute to the NAD(+) site. Tyr225 provides a ligand contact to substrate. The active-site Proton donor is Tyr235. Residues Lys244 and 274–276 (VVT) contribute to the NAD(+) site.

It belongs to the TER reductase family. Monomer.

It catalyses the reaction a 2,3-saturated acyl-[ACP] + NAD(+) = a (2E)-enoyl-[ACP] + NADH + H(+). Its pathway is lipid metabolism; fatty acid biosynthesis. In terms of biological role, involved in the final reduction of the elongation cycle of fatty acid synthesis (FAS II). Catalyzes the reduction of a carbon-carbon double bond in an enoyl moiety that is covalently linked to an acyl carrier protein (ACP). In Yersinia pseudotuberculosis serotype O:1b (strain IP 31758), this protein is Enoyl-[acyl-carrier-protein] reductase [NADH].